A 332-amino-acid chain; its full sequence is Ubiquinone biosynthesis protein COQ4, mitochondrial (332 aa).

The N-terminal 16 residues, 1–16, are a transit peptide targeting the mitochondrion; that stretch reads MFTVSKKSLQASRNAF. 4 residues coordinate Zn(2+): His212, Asp213, His216, and Glu228.

It belongs to the COQ4 family. As to quaternary structure, component of a multi-subunit COQ enzyme complex, composed of at least COQ3, COQ4, COQ5, COQ6, COQ7 and COQ9. The cofactor is Zn(2+).

Its subcellular location is the mitochondrion inner membrane. It catalyses the reaction a 4-hydroxy-3-methoxy-5-(all-trans-polyprenyl)benzoate + H(+) = a 2-methoxy-6-(all-trans-polyprenyl)phenol + CO2. Its pathway is cofactor biosynthesis; ubiquinone biosynthesis. Its function is as follows. Lyase that catalyzes the C1-decarboxylation of 4-hydroxy-3-methoxy-5-(all-trans-polyprenyl)benzoic acid into 2-methoxy-6-(all-trans-polyprenyl)phenol during ubiquinone biosynthesis. This is Ubiquinone biosynthesis protein COQ4, mitochondrial from Kluyveromyces lactis (strain ATCC 8585 / CBS 2359 / DSM 70799 / NBRC 1267 / NRRL Y-1140 / WM37) (Yeast).